The chain runs to 109 residues: Aquaporin-2 (109 aa).

Over 1–6 (SIAFSR) the chain is Cytoplasmic. A helical transmembrane segment spans residues 7-27 (AVFAEFLATLIFVFFGLGSAL). The Extracellular segment spans residues 28 to 35 (NWQQSLPS). The helical transmembrane segment at 36–54 (VLQIAMAFGLAIGTLVQAL) threads the bilayer. Residues 55-59 (GHISG) lie on the Cytoplasmic side of the membrane. An intramembrane region (discontinuously helical) is located at residues 60–69 (AHINPAVTVA). An NPA 1 motif is present at residues 63 to 65 (NPA). The Cytoplasmic portion of the chain corresponds to 70 to 80 (CLVGCHVSFLR). The chain crosses the membrane as a helical span at residues 81–102 (AAFYVAAQLLGAVAGAALLHEV). The Extracellular segment spans residues 103–109 (TPSDVRG).

Belongs to the MIP/aquaporin (TC 1.A.8) family. As to quaternary structure, homotetramer. Post-translationally, serine phosphorylation is necessary and sufficient for expression at the apical membrane. Endocytosis is not phosphorylation-dependent. In terms of processing, N-glycosylated.

The protein resides in the apical cell membrane. It is found in the basolateral cell membrane. The protein localises to the cell membrane. It localises to the cytoplasmic vesicle membrane. Its subcellular location is the golgi apparatus. The protein resides in the trans-Golgi network membrane. It catalyses the reaction H2O(in) = H2O(out). It carries out the reaction glycerol(in) = glycerol(out). Its function is as follows. Forms a water-specific channel that provides the plasma membranes of renal collecting duct with high permeability to water, thereby permitting water to move in the direction of an osmotic gradient. Plays an essential role in renal water homeostasis. Could also be permeable to glycerol. This chain is Aquaporin-2, found in Talpa europaea (European mole).